We begin with the raw amino-acid sequence, 958 residues long: DNA repair and recombination protein RDH54 (958 aa).

Residues 189–217 are disordered; that stretch reads EALSQNMGNPSPPTTSTTETVPSTKNDGG. Residues 202-212 are compositionally biased toward low complexity; that stretch reads TTSTTETVPST. In terms of domain architecture, Helicase ATP-binding spans 333 to 521; that stretch reads LENDSDISGC…FTIIDFINPG (189 aa). 380-387 contributes to the ATP binding site; the sequence is IPLTGLCK. Positions 506–509 match the DEGH box motif; it reads NDLN. Lysine 649 is covalently cross-linked (Glycyl lysine isopeptide (Lys-Gly) (interchain with G-Cter in ubiquitin)). A Helicase C-terminal domain is found at 665–824; the sequence is KLKVLMTLLE…DSEMRNKESS (160 aa).

Belongs to the SNF2/RAD54 helicase family. In terms of assembly, interacts with RAD51 and DMC1.

It is found in the nucleus. It catalyses the reaction ATP + H2O = ADP + phosphate + H(+). In terms of biological role, involved in the recombinational repair of double-strand breaks (DSB) in DNA during mitosis and meiosis. Has DNA dependent ATPase activity. Promotes D-loop (displacement loop) formation with RAD51 recombinase. Modifies the topology of double-stranded DNA during the D-loop reaction to facilitate the invasion of the homologous duplex molecule by the initiating single-stranded DNA substrate. Required for adaptation from G2/M checkpoint arrest induced by a double strand break, by participating in monitoring the extent of single-stranded DNA produced by resection of DNA ends. This role is distinct from its roles in recombination. Promotes colocalization of RAD51 and DMC1 during meiotic recombination. Involved in crossover interference. The protein is DNA repair and recombination protein RDH54 (RDH54) of Saccharomyces cerevisiae (strain ATCC 204508 / S288c) (Baker's yeast).